A 462-amino-acid polypeptide reads, in one-letter code: 2-amino-5-chloromuconic acid deaminase (462 aa).

Residues Lys79 and Ser156 each act as charge relay system in the active site. Residue Ser180 is the Acyl-ester intermediate of the active site.

This sequence belongs to the amidase family.

It carries out the reaction (2Z,4E)-2-aminomuconate + H2O = (3E)-2-oxohex-3-enedioate + NH4(+). The protein operates within xenobiotic degradation; nitrobenzene degradation. It functions in the pathway xenobiotic degradation; 4-chloronitrobenzene degradation. In terms of biological role, involved in the biodegradation of nitroaromatic and chlorinated nitroaromatic compounds. Catalyzes the conversion of 2-amino-5-chloromuconic acid into 2-hydroxy-5-chloromuconic acid and ammonia. Also able to catalyze the transformation of 2-aminomuconic acid into 2-hydroxymuconic acid. This Comamonas testosteroni (Pseudomonas testosteroni) protein is 2-amino-5-chloromuconic acid deaminase.